We begin with the raw amino-acid sequence, 348 residues long: tRNA-specific 2-thiouridylase MnmA (348 aa).

ATP is bound by residues L8 to S15 and M34. The active-site Nucleophile is C105. C105 and C197 form a disulfide bridge. Residue G129 participates in ATP binding. The tract at residues K147–Q149 is interaction with tRNA. C197 (cysteine persulfide intermediate) is an active-site residue.

The protein belongs to the MnmA/TRMU family.

It is found in the cytoplasm. The enzyme catalyses S-sulfanyl-L-cysteinyl-[protein] + uridine(34) in tRNA + AH2 + ATP = 2-thiouridine(34) in tRNA + L-cysteinyl-[protein] + A + AMP + diphosphate + H(+). Catalyzes the 2-thiolation of uridine at the wobble position (U34) of tRNA, leading to the formation of s(2)U34. This chain is tRNA-specific 2-thiouridylase MnmA, found in Fervidobacterium nodosum (strain ATCC 35602 / DSM 5306 / Rt17-B1).